We begin with the raw amino-acid sequence, 190 residues long: Cancer-related nucleoside-triphosphatase homolog (190 aa).

Alanine 2 is subject to N-acetylalanine. ATP contacts are provided by residues 9 to 16 (GPPGVGKT) and 109 to 116 (ICVIDEVG). Lysine 165 carries the N6-acetyllysine modification.

The protein belongs to the THEP1 NTPase family. As to quaternary structure, monomer.

The catalysed reaction is a ribonucleoside 5'-triphosphate + H2O = a ribonucleoside 5'-diphosphate + phosphate + H(+). It carries out the reaction 5-methyl-UTP + H2O = 5-methyl-UDP + phosphate + H(+). The enzyme catalyses CTP + H2O = CDP + phosphate + H(+). It catalyses the reaction ATP + H2O = ADP + phosphate + H(+). The catalysed reaction is GTP + H2O = GDP + phosphate + H(+). In terms of biological role, has nucleotide phosphatase activity towards ATP, GTP, CTP, TTP and UTP. Hydrolyzes nucleoside diphosphates with lower efficiency. The protein is Cancer-related nucleoside-triphosphatase homolog (NTPCR) of Bos taurus (Bovine).